The chain runs to 325 residues: Probable 4-hydroxy-tetrahydrodipicolinate reductase 2, chloroplastic (325 aa).

The transit peptide at 1–32 directs the protein to the chloroplast; that stretch reads MLSLRPPCTLSPAPWRRRRTLHGAAGTPQRVS. Residues 57–62, 149–151, and 172–175 contribute to the NAD(+) site; these read GCTGKM, GTT, and SPQM. The active-site Proton donor/acceptor is His208. Lys212 acts as the Proton donor in catalysis. 217–218 serves as a coordination point for (S)-2,3,4,5-tetrahydrodipicolinate; the sequence is GT.

The protein belongs to the DapB family.

The protein localises to the plastid. It is found in the chloroplast. The enzyme catalyses (S)-2,3,4,5-tetrahydrodipicolinate + NAD(+) + H2O = (2S,4S)-4-hydroxy-2,3,4,5-tetrahydrodipicolinate + NADH + H(+). It carries out the reaction (S)-2,3,4,5-tetrahydrodipicolinate + NADP(+) + H2O = (2S,4S)-4-hydroxy-2,3,4,5-tetrahydrodipicolinate + NADPH + H(+). It participates in amino-acid biosynthesis; L-lysine biosynthesis via DAP pathway; (S)-tetrahydrodipicolinate from L-aspartate: step 4/4. Functionally, catalyzes the conversion of 4-hydroxy-tetrahydrodipicolinate (HTPA) to tetrahydrodipicolinate. The polypeptide is Probable 4-hydroxy-tetrahydrodipicolinate reductase 2, chloroplastic (DAPB2) (Oryza sativa subsp. japonica (Rice)).